The primary structure comprises 547 residues: Malolactic enzyme (547 aa).

The Proton donor role is filled by Tyr92. The Proton acceptor role is filled by Lys165. A substrate-binding site is contributed by Lys165. Mn(2+) contacts are provided by Glu236, Asp237, and Asp260. Residues 293 to 296, Asn405, and Asn450 each bind NAD(+); that span reads AGTA. Asn450 provides a ligand contact to substrate.

This sequence belongs to the malic enzymes family. Homodimer. Mn(2+) serves as cofactor. The cofactor is NAD(+).

It catalyses the reaction (S)-malate + H(+) = (S)-lactate + CO2. In terms of biological role, involved in the malolactic fermentation (MLF) of wine, which results in a natural decrease in acidity and favorable changes in wine flavors. Catalyzes the decarboxylation of L-malate to L-lactate. The polypeptide is Malolactic enzyme (Lactiplantibacillus plantarum (strain ATCC BAA-793 / NCIMB 8826 / WCFS1) (Lactobacillus plantarum)).